The following is a 435-amino-acid chain: GTPase Der (435 aa).

2 consecutive EngA-type G domains span residues 4 to 167 and 175 to 350; these read KIVA…SKND and TKIA…QSLS. GTP-binding positions include 10–17, 57–61, 119–122, 181–188, 228–232, and 293–296; these read GRPNVGKS, DTGGI, NKYD, DTAGI, and NKWD. The KH-like domain occupies 351 to 435; it reads VKVKTYVLNE…PINLIFRERK (85 aa).

The protein belongs to the TRAFAC class TrmE-Era-EngA-EngB-Septin-like GTPase superfamily. EngA (Der) GTPase family. Associates with the 50S ribosomal subunit.

Its function is as follows. GTPase that plays an essential role in the late steps of ribosome biogenesis. The protein is GTPase Der of Mycoplasma mycoides subsp. mycoides SC (strain CCUG 32753 / NCTC 10114 / PG1).